The chain runs to 285 residues: sn-2 palmitoyl-lipid 9-desaturase (285 aa).

2 helical membrane passes run 20 to 40 (WINVVFFGVFHALALLSPWFF) and 44 to 64 (ALGLLVFLHWLFGSIGICLGY). The Histidine box-1 motif lies at 65 to 70 (HRLLSH). Residues 81-101 (YAIALIGALALQGGPIFWVGG) form a helical membrane-spanning segment. Residues 102–106 (HRQHH) carry the Histidine box-2 motif. The chain crosses the membrane as a helical span at residues 169–189 (IPFALLLYVLGGWPFVFYGVF). Positions 239–243 (HHTYP) match the Histidine box-3 motif.

The protein belongs to the fatty acid desaturase type 2 family. Requires Fe(2+) as cofactor.

Its subcellular location is the membrane. It carries out the reaction a 1-acyl-2-hexadecanoyl-glycerolipid + 2 reduced [2Fe-2S]-[ferredoxin] + O2 + 2 H(+) = a 1-acyl-2-[(9Z)-hexadecenoyl]-glycerolipid + 2 oxidized [2Fe-2S]-[ferredoxin] + 2 H2O. It functions in the pathway lipid metabolism; fatty acid biosynthesis. Its function is as follows. Desaturase involved in fatty acid biosynthesis. Introduces a double bond at carbon 9 of palmitoyl groups (16:0) attached to the sn-2 position of the glycerol moiety of membrane glycerolipids. This is sn-2 palmitoyl-lipid 9-desaturase from Nostoc sp. (strain 36).